Reading from the N-terminus, the 193-residue chain is Large ribosomal subunit protein uL18 (193 aa).

The protein belongs to the universal ribosomal protein uL18 family. In terms of assembly, part of the 50S ribosomal subunit. Contacts the 5S and 23S rRNAs.

Functionally, this is one of the proteins that bind and probably mediate the attachment of the 5S RNA into the large ribosomal subunit, where it forms part of the central protuberance. The sequence is that of Large ribosomal subunit protein uL18 from Methanococcus maripaludis (strain DSM 14266 / JCM 13030 / NBRC 101832 / S2 / LL).